We begin with the raw amino-acid sequence, 193 residues long: dCTP deaminase (193 aa).

DCTP-binding positions include 110–115, aspartate 128, 136–138, tyrosine 171, lysine 178, and glutamine 182; these read RSSLAR and VLE. Glutamate 138 (proton donor/acceptor) is an active-site residue. Positions 171 to 193 are disordered; that stretch reads YNKRKNAKYKDQQDAVASRISQD.

It belongs to the dCTP deaminase family. Homotrimer.

It carries out the reaction dCTP + H2O + H(+) = dUTP + NH4(+). It functions in the pathway pyrimidine metabolism; dUMP biosynthesis; dUMP from dCTP (dUTP route): step 1/2. Its function is as follows. Catalyzes the deamination of dCTP to dUTP. The polypeptide is dCTP deaminase (Shewanella oneidensis (strain ATCC 700550 / JCM 31522 / CIP 106686 / LMG 19005 / NCIMB 14063 / MR-1)).